The sequence spans 200 residues: Peptidyl-tRNA hydrolase (200 aa).

Tyr-15 serves as a coordination point for tRNA. The active-site Proton acceptor is the His-20. Residues Phe-66, Asn-68, and Asn-114 each coordinate tRNA.

It belongs to the PTH family. As to quaternary structure, monomer.

Its subcellular location is the cytoplasm. The enzyme catalyses an N-acyl-L-alpha-aminoacyl-tRNA + H2O = an N-acyl-L-amino acid + a tRNA + H(+). Its function is as follows. Hydrolyzes ribosome-free peptidyl-tRNAs (with 1 or more amino acids incorporated), which drop off the ribosome during protein synthesis, or as a result of ribosome stalling. Catalyzes the release of premature peptidyl moieties from peptidyl-tRNA molecules trapped in stalled 50S ribosomal subunits, and thus maintains levels of free tRNAs and 50S ribosomes. In Ralstonia pickettii (strain 12J), this protein is Peptidyl-tRNA hydrolase.